The sequence spans 400 residues: Protein phosphatase methylesterase 1 (400 aa).

Residues 32–70 (DENDGDALGSLPSFNGQSNRNRKYTGKTGSTTDRISSKE) form a disordered region. One can recognise an AB hydrolase-1 domain in the interval 114-365 (PIFIFHHGAG…DSGHFIQEDS (252 aa)). Active-site residues include Ser205, Asp233, and His359.

Belongs to the AB hydrolase superfamily. As to quaternary structure, interacts with and inactivates the phosphatase PP2A-like catalytic subunits PPG1, PPH21, PPH22, PPH3 and SIT4.

It catalyses the reaction [phosphatase 2A protein]-C-terminal L-leucine methyl ester + H2O = [phosphatase 2A protein]-C-terminal L-leucine + methanol + H(+). Demethylates proteins that have been reversibly carboxymethylated. Demethylates the phosphatase PP2A catalytic subunits PPH21 and PPH22. Forms inactive complexes (PP2Ai) with phosphatase PP2A-like catalytic subunits. Involved in the regulation of cell cycle progression at START. The polypeptide is Protein phosphatase methylesterase 1 (PPE1) (Saccharomyces cerevisiae (strain ATCC 204508 / S288c) (Baker's yeast)).